A 63-amino-acid polypeptide reads, in one-letter code: MLGHSIRRFTTSVVRRSHYEEGPGKNLPFSVKNKWALLVKMSLYFGSAFATPFLIVRHQLLKQ.

The N-terminal 16 residues, 1-16 (MLGHSIRRFTTSVVRR), are a transit peptide targeting the mitochondrion. Topologically, residues 17–33 (SHYEEGPGKNLPFSVKN) are mitochondrial matrix. An N6-acetyllysine; alternate modification is found at K25. K25 carries the N6-succinyllysine; alternate modification. Residues 34–60 (KWALLVKMSLYFGSAFATPFLIVRHQL) traverse the membrane as a helical segment. The Mitochondrial intermembrane segment spans residues 61–63 (LKQ).

The protein belongs to the cytochrome c oxidase VIIc family. In terms of assembly, component of the cytochrome c oxidase (complex IV, CIV), a multisubunit enzyme composed of 14 subunits. The complex is composed of a catalytic core of 3 subunits MT-CO1, MT-CO2 and MT-CO3, encoded in the mitochondrial DNA, and 11 supernumerary subunits COX4I, COX5A, COX5B, COX6A, COX6B, COX6C, COX7A, COX7B, COX7C, COX8 and NDUFA4, which are encoded in the nuclear genome. The complex exists as a monomer or a dimer and forms supercomplexes (SCs) in the inner mitochondrial membrane with NADH-ubiquinone oxidoreductase (complex I, CI) and ubiquinol-cytochrome c oxidoreductase (cytochrome b-c1 complex, complex III, CIII), resulting in different assemblies (supercomplex SCI(1)III(2)IV(1) and megacomplex MCI(2)III(2)IV(2)). Interacts with RAB5IF.

Its subcellular location is the mitochondrion inner membrane. It participates in energy metabolism; oxidative phosphorylation. Component of the cytochrome c oxidase, the last enzyme in the mitochondrial electron transport chain which drives oxidative phosphorylation. The respiratory chain contains 3 multisubunit complexes succinate dehydrogenase (complex II, CII), ubiquinol-cytochrome c oxidoreductase (cytochrome b-c1 complex, complex III, CIII) and cytochrome c oxidase (complex IV, CIV), that cooperate to transfer electrons derived from NADH and succinate to molecular oxygen, creating an electrochemical gradient over the inner membrane that drives transmembrane transport and the ATP synthase. Cytochrome c oxidase is the component of the respiratory chain that catalyzes the reduction of oxygen to water. Electrons originating from reduced cytochrome c in the intermembrane space (IMS) are transferred via the dinuclear copper A center (CU(A)) of subunit 2 and heme A of subunit 1 to the active site in subunit 1, a binuclear center (BNC) formed by heme A3 and copper B (CU(B)). The BNC reduces molecular oxygen to 2 water molecules using 4 electrons from cytochrome c in the IMS and 4 protons from the mitochondrial matrix. This is Cytochrome c oxidase subunit 7C, mitochondrial (COX7C) from Papio hamadryas (Hamadryas baboon).